A 336-amino-acid chain; its full sequence is tRNA (guanine(10)-N2)-dimethyltransferase (336 aa).

Residues 50 to 147 (KILKKRLAYA…NDRFILTRRL (98 aa)) enclose the THUMP domain.

This sequence belongs to the methyltransferase superfamily. Trm-G10 family. In terms of assembly, monomer.

It localises to the cytoplasm. The enzyme catalyses guanosine(10) in tRNA + 2 S-adenosyl-L-methionine = N(2)-dimethylguanosine(10) in tRNA + 2 S-adenosyl-L-homocysteine + 2 H(+). In terms of biological role, catalyzes the adenosylmethionine-dependent methylation of the exocyclic amino group (N(2)) of guanosine at position 10 of various tRNAs. Acts via a two-step process that leads to the formation of either N(2)-monomethyl (m(2)G) or N(2)-dimethylguanosine (m(2)(2)G). This is tRNA (guanine(10)-N2)-dimethyltransferase (trmG10) from Methanothermobacter thermautotrophicus (strain ATCC 29096 / DSM 1053 / JCM 10044 / NBRC 100330 / Delta H) (Methanobacterium thermoautotrophicum).